The following is a 313-amino-acid chain: D-alanine--D-alanine ligase (313 aa).

The ATP-grasp domain occupies 108-308; the sequence is KLVWQQLGIP…YQELVVKVLA (201 aa). 138–193 is a binding site for ATP; sequence VAKLGLPLFVKPASEGSSVAVIKVKTADALVPALEEAVKFDKIVVVEKSIEGGGEY. Asp-262, Glu-275, and Asn-277 together coordinate Mg(2+).

This sequence belongs to the D-alanine--D-alanine ligase family. The cofactor is Mg(2+). Requires Mn(2+) as cofactor.

It is found in the cytoplasm. The catalysed reaction is 2 D-alanine + ATP = D-alanyl-D-alanine + ADP + phosphate + H(+). The protein operates within cell wall biogenesis; peptidoglycan biosynthesis. In terms of biological role, cell wall formation. The protein is D-alanine--D-alanine ligase of Paraburkholderia phymatum (strain DSM 17167 / CIP 108236 / LMG 21445 / STM815) (Burkholderia phymatum).